Here is a 297-residue protein sequence, read N- to C-terminus: Bifunctional protein FolD (297 aa).

NADP(+) is bound by residues 169–171 (GRS), Ser196, and Ile237.

It belongs to the tetrahydrofolate dehydrogenase/cyclohydrolase family. As to quaternary structure, homodimer.

The enzyme catalyses (6R)-5,10-methylene-5,6,7,8-tetrahydrofolate + NADP(+) = (6R)-5,10-methenyltetrahydrofolate + NADPH. It catalyses the reaction (6R)-5,10-methenyltetrahydrofolate + H2O = (6R)-10-formyltetrahydrofolate + H(+). The protein operates within one-carbon metabolism; tetrahydrofolate interconversion. Functionally, catalyzes the oxidation of 5,10-methylenetetrahydrofolate to 5,10-methenyltetrahydrofolate and then the hydrolysis of 5,10-methenyltetrahydrofolate to 10-formyltetrahydrofolate. The polypeptide is Bifunctional protein FolD (Salinibacter ruber (strain DSM 13855 / M31)).